The following is a 458-amino-acid chain: Ammonium transporter Rh type B (458 aa).

Residues 1–13 (MAGSPSRAAGRRL) are Cytoplasmic-facing. Residues 14–34 (QLPLLCLFLQGATAVLFAVFV) form a helical membrane-spanning segment. Topologically, residues 35-61 (RYNHKTDAALWHRSNHSNADNEFYFRY) are extracellular. Asparagine 49 carries an N-linked (GlcNAc...) asparagine glycan. The helical transmembrane segment at 62–82 (PSFQDVHAMVFVGFGFLMVFL) threads the bilayer. At 83–86 (QRYG) the chain is on the cytoplasmic side. The chain crosses the membrane as a helical span at residues 87-107 (FSSVGFTFLLAAFALQWSTLV). Residues 108–124 (QGFLHSFHGGHIHVGVE) are Extracellular-facing. Residues 125-145 (SMINADFCAGAVLISFGAVLG) traverse the membrane as a helical segment. Over 146–149 (KTGP) the chain is Cytoplasmic. The chain crosses the membrane as a helical span at residues 150-170 (AQLLLMALLEVVLFGINEFVL). The Extracellular segment spans residues 171 to 178 (LHLLGVRD). A helical membrane pass occupies residues 179–201 (AGGSMTIHTFGAYFGLVLSRVLY). Topologically, residues 202–219 (RPQLEKSKHRQGSVYHSD) are cytoplasmic. Residues 220-240 (LFTMIGTIFLWIFWPSFNAAL) traverse the membrane as a helical segment. The Extracellular portion of the chain corresponds to 241–251 (TALGAGQHRTA). The helical transmembrane segment at 252 to 272 (LNTYYSLAASTLGTFALSALV) threads the bilayer. The Cytoplasmic portion of the chain corresponds to 273-282 (GEDGRLDMVH). Residues 283–303 (IQNAALTGGVVVGTSSKMMLT) form a helical membrane-spanning segment. Position 304 (proline 304) is a topological domain, extracellular. Residues 305–325 (FGALAAGFLAGTVSTLGYKFF) form a helical membrane-spanning segment. Over 326-346 (TPILESKFKVQDTCGVHNLHG) the chain is Cytoplasmic. Residues 347–367 (MPGVLGALLGVLVAGLATHEA) traverse the membrane as a helical segment. Over 368 to 393 (YGDGLESVFPLIAEGQRSATSQAMHQ) the chain is Extracellular. A helical transmembrane segment spans residues 394–414 (LFGLFVTLMFASVGGGLGGLL). At 415-458 (LKLPFLDSPPDSQCYEDQVHWQVPGEHEDKAQRPLRVEEADTYA) the chain is on the cytoplasmic side. Residues 416–424 (KLPFLDSPP) are interaction with ANK3. The Basolateral sorting signal signature appears at 429 to 432 (YEDQ). The disordered stretch occupies residues 439–458 (GEHEDKAQRPLRVEEADTYA).

This sequence belongs to the ammonium transporter (TC 2.A.49) family. Rh subfamily. In terms of assembly, interacts (via C-terminus) with ANK2 and ANK3; required for targeting to the basolateral membrane. N-glycosylated.

It is found in the cell membrane. The protein localises to the basolateral cell membrane. It catalyses the reaction NH4(+)(in) = NH4(+)(out). It carries out the reaction methylamine(out) = methylamine(in). The catalysed reaction is CO2(out) = CO2(in). Functionally, ammonium transporter involved in the maintenance of acid-base homeostasis. Transports ammonium and its related derivative methylammonium across the basolateral plasma membrane of epithelial cells likely contributing to renal transepithelial ammonia transport and ammonia metabolism. May transport either NH4(+) or NH3 ammonia species predominantly mediating an electrogenic NH4(+) transport. May act as a CO2 channel providing for renal acid secretion. In Gorilla gorilla gorilla (Western lowland gorilla), this protein is Ammonium transporter Rh type B (RHBG).